The sequence spans 746 residues: tRNA(Met) cytidine acetyltransferase TmcA (746 aa).

The segment at 181 to 200 (ARAETGGNPPSPGDSACRTE) is disordered. ATP contacts are provided by residues glutamine 202, 228–237 (GRGKSAALGI), and arginine 370. An N-acetyltransferase domain is found at 405 to 617 (VAVERLDRDA…VHLPHQLADP (213 aa)). Acetyl-CoA-binding positions include 517 to 519 (IAV), 524 to 530 (QGQGLGT), glutamate 557, and arginine 564.

It belongs to the RNA cytidine acetyltransferase family. TmcA subfamily.

The protein localises to the cytoplasm. The enzyme catalyses cytidine(34) in elongator tRNA(Met) + acetyl-CoA + ATP + H2O = N(4)-acetylcytidine(34) in elongator tRNA(Met) + ADP + phosphate + CoA + H(+). Functionally, catalyzes the formation of N(4)-acetylcytidine (ac(4)C) at the wobble position of tRNA(Met), by using acetyl-CoA as an acetyl donor and ATP (or GTP). This Nitrosococcus halophilus (strain Nc4) protein is tRNA(Met) cytidine acetyltransferase TmcA.